A 389-amino-acid polypeptide reads, in one-letter code: Sterol methyltransferase-like 2 (389 aa).

The helical transmembrane segment at 25–45 (LSWKGAVGLVAATGIGYVLII) threads the bilayer.

This sequence belongs to the class I-like SAM-binding methyltransferase superfamily. Erg6/SMT family.

It localises to the microsome membrane. Unable to convert squalene, botryococcene, cycloartenol, zymosterol or lanosterol to mono-, di-, tri- or tetramethylated derivatives. This is Sterol methyltransferase-like 2 (SMT-2) from Botryococcus braunii (Green alga).